Consider the following 904-residue polypeptide: Myelin regulatory factor-like protein (904 aa).

A disordered region spans residues 46–132 (LQRQLPDTPP…ATCRHQTGPS (87 aa)). Residues 100-117 (PSQSMAGQTHSSFQNGYP) show a composition bias toward polar residues. Residues 108–400 (THSSFQNGYP…SNPGQFENDS (293 aa)) constitute a DNA-binding region (NDT80). The Peptidase S74 domain maps to 446–554 (SDSRVKENIQ…KLTNNLEERI (109 aa)). A coiled-coil region spans residues 538 to 575 (GAVKQLCKLTNNLEERIEELEIWNKKLARLKRLSSSWK). A helical transmembrane segment spans residues 624 to 644 (LVVVLIAVMAFCALTIVALYI). The disordered stretch occupies residues 656 to 688 (NLPLSNMTSSPEPALSSTAPTSAPHTTPETTQT). A compositionally biased stretch (low complexity) spans 663-688 (TSSPEPALSSTAPTSAPHTTPETTQT).

It belongs to the MRF family.

Its subcellular location is the membrane. This Mus musculus (Mouse) protein is Myelin regulatory factor-like protein (Myrfl).